The sequence spans 141 residues: Regulator of ribonuclease activity B (141 aa).

Residues 112 to 141 form a disordered region; the sequence is GTYFEDPNAPDDEDDNDDLFPPEEDEPRLH. Positions 119–141 are enriched in acidic residues; sequence NAPDDEDDNDDLFPPEEDEPRLH.

Belongs to the RraB family. In terms of assembly, interacts with the C-terminal region of Rne.

The protein resides in the cytoplasm. Globally modulates RNA abundance by binding to RNase E (Rne) and regulating its endonucleolytic activity. Can modulate Rne action in a substrate-dependent manner by altering the composition of the degradosome. The polypeptide is Regulator of ribonuclease activity B (Xenorhabdus nematophila (strain ATCC 19061 / DSM 3370 / CCUG 14189 / LMG 1036 / NCIMB 9965 / AN6)).